The chain runs to 299 residues: GTPase Era (299 aa).

Residues 9-177 form the Era-type G domain; the sequence is RSGSVAVIGR…VGDLLKLVPE (169 aa). Positions 17–24 are G1; sequence GRPNVGKS. 17 to 24 serves as a coordination point for GTP; that stretch reads GRPNVGKS. Residues 43-47 form a G2 region; that stretch reads QTTRH. The segment at 64 to 67 is G3; sequence DTPG. GTP-binding positions include 64-68 and 126-129; these read DTPGL and NKVD. A G4 region spans residues 126–129; sequence NKVD. Positions 156–158 are G5; sequence VSA. Residues 200–284 form the KH type-2 domain; sequence VREQLMRQLG…FLETWVRVRE (85 aa).

Belongs to the TRAFAC class TrmE-Era-EngA-EngB-Septin-like GTPase superfamily. Era GTPase family. Monomer.

Its subcellular location is the cytoplasm. It is found in the cell inner membrane. In terms of biological role, an essential GTPase that binds both GDP and GTP, with rapid nucleotide exchange. Plays a role in 16S rRNA processing and 30S ribosomal subunit biogenesis and possibly also in cell cycle regulation and energy metabolism. The polypeptide is GTPase Era (Xanthomonas oryzae pv. oryzae (strain MAFF 311018)).